The sequence spans 169 residues: Myelin basic protein (169 aa).

N-acetylalanine is present on Ala-1. A disordered region spans residues 1 to 114 (AAQKRPSQRS…GRGLSLSRFS (114 aa)). Residue Ser-7 is modified to Phosphoserine; in C5 and C6. Ser-10 is modified (phosphoserine). Tyr-12 bears the Phosphotyrosine mark. Ser-17 bears the Phosphoserine mark. At Thr-18 the chain carries Phosphothreonine. Arg-23 carries the citrulline; in form C8b modification. The residue at position 29 (Arg-29) is a Citrulline. Residue Thr-33 is modified to Phosphothreonine. Phosphoserine is present on Ser-38. The residue at position 41 (Arg-41) is a Citrulline; alternate. Residue Arg-41 is modified to Omega-N-methylarginine; alternate. Positions 43–87 (FGSDRGAPKRGSGKDGHHAARTTHYGSLPQKAQGHRPQDENPVVH) are induces experimental autoimmune encephalomyelitis (EAE) 1. Residue Arg-47 is modified to Citrulline; in form C8b. Omega-N-methylarginine is present on Arg-47. Ser-54 is subject to Phosphoserine; in C4, C5 and C6. At Arg-63 the chain carries Citrulline. The residue at position 65 (Thr-65) is a Phosphothreonine. Phosphotyrosine is present on Tyr-67. The residue at position 94 (Thr-94) is a Phosphothreonine. Citrulline; in form C2, C3, C8a and C8b is present on Arg-96. A Phosphothreonine; by MAPK; in C3, C4, C5 and C6 modification is found at Thr-97. Residue Gln-102 is modified to Deamidated glutamine; in form C5. Arg-106 carries the citrulline; alternate modification. Omega-N-methylarginine; alternate is present on Arg-106. Position 106 is a symmetric dimethylarginine; alternate (Arg-106). Arg-112 is subject to Citrulline. Ser-114 is subject to Phosphoserine. The induces experimental autoimmune encephalomyelitis (EAE) 2 stretch occupies residues 114–122 (SWGAEGQKP). At Gln-120 the chain carries Deamidated glutamine; in form C3. Lys-121 carries the N6-acetyllysine modification. Citrulline is present on Arg-129. A disordered region spans residues 133-169 (YKSAHKGLKGHDAQGTLSKIFKLGGRDSRSGSPMARR). Gln-146 is subject to Deamidated glutamine; in form C2. Citrulline is present on Arg-158. Residue Ser-160 is modified to Phosphoserine; in C4 and C6. Arg-161 is modified (citrulline; in form C3). Residue Ser-164 is modified to Phosphoserine; in form C3, C5 and C6. A citrulline mark is found at Arg-168 and Arg-169.

It belongs to the myelin basic protein family. Homodimer; self-associates in the presence of lysolipid. At least 6 charge isomers; C1 (the most cationic and least modified form), C2, C3, C4, C5 and C6 (the least cationic form); are produced as a result of optional post-translational modifications, such as phosphorylation of serine or threonine residues, deamidation of glutamine or asparagine residues, citrullination and methylation of arginine residues. Post-translationally, phosphorylated by TAOK2, VRK2, MAPK11, MAPK12, MAPK14 and MINK1. In terms of processing, proteolytically cleaved in B cell lysosomes by cathepsin CTSG which degrades the major immunogenic MBP epitope and prevents the activation of MBP-specific autoreactive T cells. Found in both the central and the peripheral nervous system.

The protein resides in the myelin membrane. Functionally, is, with PLP, the most abundant protein component of the myelin membrane in the CNS. Has a role in both the formation and stabilization of this compact multilayer arrangement of bilayers. Each splice variant and charge isomer may have a specialized function in the assembly of an optimized, biochemically functional myelin membrane. This chain is Myelin basic protein (MBP), found in Bos taurus (Bovine).